The following is a 129-amino-acid chain: HTH-type transcriptional regulator HmrR (129 aa).

Residues 1-68 form the HTH merR-type domain; it reads MNIGEASERS…VEECRQLLAL (68 aa). The H-T-H motif DNA-binding region spans 4–23; sequence GEASERSGLPSKTIRYYEDI.

Homodimer.

It is found in the cytoplasm. Its function is as follows. Regulates the transcription of actP. It detects cytoplasmic copper stress and activates transcription in response to increasing copper concentrations. In the absence of copper, it negatively regulates the transcription of actP. The polypeptide is HTH-type transcriptional regulator HmrR (hmrR) (Rhizobium leguminosarum bv. viciae).